The primary structure comprises 5405 residues: IgGFc-binding protein (5405 aa).

Residues 1 to 23 form the signal peptide; the sequence is MGALWSWWILWAGATLLWGLTQE. The tract at residues 24-450 is igGFc-binding; that stretch reads ASVDLKNTGR…EPSCEGMQCA (427 aa). Residues asparagine 75 and asparagine 91 are each glycosylated (N-linked (GlcNAc...) asparagine). Positions 470–650 constitute a VWFD 1 domain; the sequence is AVCRAQGDPH…KLDDGDYLCE (181 aa). Intrachain disulfides connect cysteine 472/cysteine 611 and cysteine 494/cysteine 649. One can recognise a TIL 1 domain in the interval 745–799; sequence CPANSRYELCGPACPTSCNGAAAPSNCSGRPCVEGCVCLPGFVASGGACVPASSC. Residues 862-1041 form the VWFD 2 domain; it reads GTCQGSGDPH…WQEETRPGCG (180 aa). 2 disulfides stabilise this stretch: cysteine 864–cysteine 1003 and cysteine 886–cysteine 1040. The 54-residue stretch at 1136–1189 folds into the TIL 2 domain; it reads CPPHSHYEACSYGCPLSCGDLPVPGGCGSECHEGCVCDEGFALSGESCLPLASC. Residues 1250 to 1429 form the VWFD 3 domain; it reads STCQASGDPH…EEVVPDSPCL (180 aa). 2 disulfides stabilise this stretch: cysteine 1252-cysteine 1390 and cysteine 1274-cysteine 1428. The N-linked (GlcNAc...) (complex) asparagine glycan is linked to asparagine 1317. Positions 1532 to 1585 constitute a TIL 3 domain; it reads CPPNSHYELCADTCSLGCSALSAPPQCQDGCAEGCQCDSGFLYNGQACVPIQQC. Residues 1671–1854 form the VWFD 4 domain; sequence ATCWLWGDPH…RAPGWDPLCW (184 aa). 3 cysteine pairs are disulfide-bonded: cysteine 1673-cysteine 1815, cysteine 1695-cysteine 1853, and cysteine 1704-cysteine 1812. An N-linked (GlcNAc...) asparagine glycan is attached at asparagine 1743. The 58-residue stretch at 1950–2007 folds into the TIL 4 domain; it reads CPENSHYEVCGSPCPASCPSPAPLTTPAVCEGPCVEGCQCDAGFVLSADRCVPLNNGC. Positions 2070–2253 constitute a VWFD 5 domain; sequence AECQAWGDPH…VSKPCPSPCT (184 aa). 2 disulfides stabilise this stretch: cysteine 2072/cysteine 2211 and cysteine 2094/cysteine 2252. The N-linked (GlcNAc...) asparagine glycan is linked to asparagine 2138. One can recognise a TIL 5 domain in the interval 2337–2390; that stretch reads CPAHSHYELCGDSCPGSCPSLSAPEGCESACREGCVCDAGFVLSGDTCVPVGQC. The VWFD 6 domain occupies 2451-2630; that stretch reads TTCQASGDPH…EEVVPDSPCL (180 aa). 2 cysteine pairs are disulfide-bonded: cysteine 2453–cysteine 2591 and cysteine 2475–cysteine 2629. The N-linked (GlcNAc...) asparagine glycan is linked to asparagine 2518. The region spanning 2733–2786 is the TIL 6 domain; sequence CPQNSHYELCADTCSLGCSALSAPLQCPDGCAEGCQCDSGFLYNGQACVPIQQC. The 184-residue stretch at 2872 to 3055 folds into the VWFD 7 domain; the sequence is ATCWLWGDPH…RAPGWDPLCW (184 aa). Cystine bridges form between cysteine 2874-cysteine 3016, cysteine 2896-cysteine 3054, and cysteine 2905-cysteine 3013. The TIL 7 domain maps to 3151-3208; that stretch reads CPENSHYEVCGPPCPASCPSPAPLTTPAVCEGPCVEGCQCDAGFVLSADRCVPLNNGC. The VWFD 8 domain maps to 3271-3454; it reads AECQAWGDPH…VSKPCPSPCT (184 aa). 2 disulfide bridges follow: cysteine 3273–cysteine 3412 and cysteine 3295–cysteine 3453. Residues 3538–3591 enclose the TIL 8 domain; sequence CPAHSHYELCGDSCPGSCPSLSAPEGCESACREGCVCDAGFVLSGDTCVPVGQC. The VWFD 9 domain occupies 3652–3831; sequence TTCQASGDPH…EEVVPDSPCL (180 aa). 2 disulfide bridges follow: cysteine 3654–cysteine 3792 and cysteine 3676–cysteine 3830. Asparagine 3719 is a glycosylation site (N-linked (GlcNAc...) asparagine). The TIL 9 domain occupies 3934-3987; it reads CPQNSHYELCADTCSLGCSALSAPLQCPDGCAEGCQCDSGFLYNGQACVPIQQC. Positions 4073 to 4256 constitute a VWFD 10 domain; that stretch reads ATCWLWGDPH…RAPGWDPLCW (184 aa). 3 disulfide bridges follow: cysteine 4075-cysteine 4217, cysteine 4097-cysteine 4255, and cysteine 4106-cysteine 4214. The N-linked (GlcNAc...) asparagine glycan is linked to asparagine 4145. The TIL 10 domain occupies 4352–4409; that stretch reads CPENSHYEVCGPPCPASCPSPAPLTTPAVCEGPCVEGCQCDAGFVLSADRCVPLNNGC. Residues 4472–4655 enclose the VWFD 11 domain; that stretch reads AECQAWGDPH…VSKPCPSPCT (184 aa). Intrachain disulfides connect cysteine 4474-cysteine 4613 and cysteine 4496-cysteine 4654. N-linked (GlcNAc...) asparagine glycosylation is present at asparagine 4540. The region spanning 4739–4792 is the TIL 11 domain; sequence CPAHSHYELCGDSCPVSCPSLSAPEGCESACREGCVCDAGFVLSGDTCVPVGQC. The VWFD 12 domain maps to 4854–5025; that stretch reads GRCLANGGIH…RAPGSSKGCG (172 aa). Disulfide bonds link cysteine 4856–cysteine 4986 and cysteine 4878–cysteine 5024. In terms of domain architecture, TIL 12 spans 5121–5174; sequence CPAHSHYSICTRTCQGSCAALSGLTGCTTRCFEGCECDDRFLLSQGVCIPVQDC. The VWFD 13 domain maps to 5233-5404; that stretch reads GLCVLSVGAN…WRAQDFSPCY (172 aa). A disulfide bond links cysteine 5235 and cysteine 5372.

In terms of assembly, interacts with the Fc portion of IgG and with MUC2. Mainly expressed in placenta and colon epithelium. Expressed in thyroid, and down-regulated in thyroid carcinomas. Present in serum, with higher levels in patients with various autoimmune diseases (at protein level).

The protein localises to the secreted. In terms of biological role, may be involved in the maintenance of the mucosal structure as a gel-like component of the mucosa. This chain is IgGFc-binding protein (FCGBP), found in Homo sapiens (Human).